Reading from the N-terminus, the 283-residue chain is MEEYRSKKRFGQNFLQDSHFLHKIIQSIPDIPIQCIEIGVGLGDLTQELLKIESLIAYEVDLDLCSLLNKKFSNQIQSGRLNIIYKDILNLPSQQAWLHTHEYKVVSNLPYYIATHIILRLLRDRFCRAFLVMTQKEVAQKFCATTGQKEFCALSVLVESFGKAKMLFEVPKEAFSPMPKVTSSVFVIHKYSQQNQIEDSFLCDLESFLKIAFYAPRKTLFKNLSQVFDKKLLEEVFENENIKSNARAHEVKTKSFHHILQFLKKRNDNGKQTLTRTTKQRPS.

The S-adenosyl-L-methionine site is built by Asn-13, Leu-15, Gly-39, Glu-59, Asp-87, and Asn-108.

Belongs to the class I-like SAM-binding methyltransferase superfamily. rRNA adenine N(6)-methyltransferase family. RsmA subfamily.

Its subcellular location is the cytoplasm. It carries out the reaction adenosine(1518)/adenosine(1519) in 16S rRNA + 4 S-adenosyl-L-methionine = N(6)-dimethyladenosine(1518)/N(6)-dimethyladenosine(1519) in 16S rRNA + 4 S-adenosyl-L-homocysteine + 4 H(+). Specifically dimethylates two adjacent adenosines (A1518 and A1519) in the loop of a conserved hairpin near the 3'-end of 16S rRNA in the 30S particle. May play a critical role in biogenesis of 30S subunits. The protein is Ribosomal RNA small subunit methyltransferase A of Helicobacter hepaticus (strain ATCC 51449 / 3B1).